The sequence spans 629 residues: MFYPDPFDVIIIGGGHAGTEAAMAAARMGQQTLLLTHNIDTLGQMSCNPAIGGIGKGHLVKEVDALGGLMAKAIDQAGIQFRILNASKGPAVRATRAQADRVLYRQAVRTALENQPNLMIFQQAVEDLIVENDRVVGAVTQMGLKFRAKAVVLTVGTFLDGKIHIGLDNYSGGRAGDPPSIPLSRRLRELPLRVGRLKTGTPPRIDARTIDFSVLAQQHGDNPMPVFSFMGNASQHPQQVPCYITHTNEKTHDVIRSNLDRSPMYAGVIEGVGPRYCPSIEDKVMRFADRNQHQIFLEPEGLTSNEIYPNGISTSLPFDVQMQIVRSMQGMENAKIVRPGYAIEYDFFDPRDLKPTLESKFLQGLFFAGQINGTTGYEEAAAQGLLAGLNAARLSADKEGWAPARSQAYLGVLVDDLCTLGTKEPYRMFTSRAEYRLMLREDNADLRLTEIGRELGLVDDERWARFNEKLENIERERQRLKSTRVTPSAEAAAEVNAHLTAPLSREASGEDLLRRPEMTYEKLTTLTPFAPALTDEQAAEQVEIQVKYEGYIARQQDEIEKQLRNENTLLPATLDYRQVSGLSNEVIAKLNDHKPASIGQASRISGVTPAAISILLVWLKKQGMLRRSA.

Residues 13-18, valine 125, and serine 180 contribute to the FAD site; that span reads GGGHAG. 273–287 provides a ligand contact to NAD(+); sequence GPRYCPSIEDKVMRF. Residue glutamine 370 participates in FAD binding.

Belongs to the MnmG family. As to quaternary structure, homodimer. Heterotetramer of two MnmE and two MnmG subunits. Requires FAD as cofactor.

The protein localises to the cytoplasm. In terms of biological role, NAD-binding protein involved in the addition of a carboxymethylaminomethyl (cmnm) group at the wobble position (U34) of certain tRNAs, forming tRNA-cmnm(5)s(2)U34. The chain is tRNA uridine 5-carboxymethylaminomethyl modification enzyme MnmG from Shigella dysenteriae serotype 1 (strain Sd197).